A 272-amino-acid chain; its full sequence is MADS-box transcription factor 58 (272 aa).

Residues 1–41 (MHIYKEQEAEPSTGLMMPEPAPVASPGSGGSGGSGSVGAEK) are disordered. Over residues 27 to 36 (GSGGSGGSGS) the composition is skewed to gly residues. Positions 43–103 (GSRGKIEIKR…GRLYEYSNNS (61 aa)) constitute an MADS-box domain. Residues 129–219 (AQHYQQEAAK…KSKVAESERG (91 aa)) form the K-box domain.

Expressed in the lodicule, stamen carpel and ovule primordia.

Its subcellular location is the nucleus. In terms of biological role, probable transcription factor involved in the development of floral organs. Acts as a C-class protein in association with MADS3. Involved in the control of lodicule number (whorl 2), stamen specification (whorl 3), floral meristem determinacy and regulation of the carpel morphogenesis (whorl 4). Plays a more predominant role in floral meristem determinacy than MADS3. The protein is MADS-box transcription factor 58 (MADS58) of Oryza sativa subsp. japonica (Rice).